Reading from the N-terminus, the 39-residue chain is MKISRILLAAVILSSVFSITYLQSDHNTEIKVAADRVGA.

A propeptide spanning residues 1 to 34 (MKISRILLAAVILSSVFSITYLQSDHNTEIKVAA) is cleaved from the precursor.

It belongs to the Phr family. In terms of processing, contains a predicted signal peptide cleavage site in the N-terminal region, however the propeptide is probably subject to only one processing event, at the N-terminal end of the mature peptide.

It localises to the secreted. The protein localises to the cytoplasm. In terms of biological role, intercellular signaling molecule that inhibits excision of the mobile genetic element ICEBs1 when cells are crowded by cells that contain ICEBs1 and produce the PhrI peptide. Secreted during production, but the mature peptide acts intracellularly, indicating that it needs to be imported into the cell to function. Acts by inhibiting RapI activity. The protein is Phosphatase RapI inhibitor (phrI) of Bacillus subtilis (strain 168).